A 466-amino-acid chain; its full sequence is MGGMPILKLYNTLTREKADFRPIDPQNVRMYVCGPTVYDYAHIGNARPIIVFDVLFRLLRHVYGADHVTYARNITDVDDKINARALRDYPGLPLNEAIRHVTEKTETQFLEDATVLGCLDPTVQPRATENIAGMIEIIEKLIAKGHAYEAEGEVLFDTRSMDDYGQLSKRNLDEQQAGARVAVEAHKKNPGDFVLWKLSAEHEPGWDSPWGRGRPGWHIECSAMSGRYLGDVFDIHGGGIDLIFPHHENEIAQSRCAHGTEVMANVWMHNGFLQVEGRKMSKSEGNFITIYELLHTEKFGGRKWPGEVLRLAMLMTHYREPIDFSIKRLEEAEHLLSKWPVYGDAAGEADPAVVTALADDLNTVAAIQALHALAQKASADSRHLGTFAASAALLGVVPKEVELDEAVVHEIDGRVRERLELLKAKNYAEADGIRADLLARGIQLKDGKDPETGERVTTWEVKRSQV.

Cysteine 33 is a binding site for Zn(2+). The short motif at 35-45 (PTVYDYAHIGN) is the 'HIGH' region element. Residues cysteine 221, histidine 246, and glutamate 250 each contribute to the Zn(2+) site. Positions 279 to 283 (KMSKS) match the 'KMSKS' region motif. Position 282 (lysine 282) interacts with ATP.

Belongs to the class-I aminoacyl-tRNA synthetase family. In terms of assembly, monomer. Zn(2+) serves as cofactor.

The protein localises to the cytoplasm. The catalysed reaction is tRNA(Cys) + L-cysteine + ATP = L-cysteinyl-tRNA(Cys) + AMP + diphosphate. This Rhizobium meliloti (strain 1021) (Ensifer meliloti) protein is Cysteine--tRNA ligase.